A 339-amino-acid polypeptide reads, in one-letter code: Centromere protein N (339 aa).

A phosphoserine mark is found at serine 226 and serine 235.

Belongs to the CENP-N/CHL4 family. In terms of assembly, component of the CENPA-NAC complex, at least composed of CENPA, CENPC, CENPH, CENPM, CENPN, CENPT and CENPU. The CENPA-NAC complex interacts with the CENPA-CAD complex, composed of CENPI, CENPK, CENPL, CENPO, CENPP, CENPQ, CENPR and CENPS. Interacts directly with CENPA. Identified in a centromere complex containing histones H2A, H2B and H4, and at least CENPA, CENPB, CENPC, CENPT, CENPN, HJURP, SUPT16H, SSRP1 and RSF1.

It is found in the nucleus. Its subcellular location is the chromosome. The protein localises to the centromere. The protein resides in the kinetochore. Component of the CENPA-NAC (nucleosome-associated) complex, a complex that plays a central role in assembly of kinetochore proteins, mitotic progression and chromosome segregation. The CENPA-NAC complex recruits the CENPA-CAD (nucleosome distal) complex and may be involved in incorporation of newly synthesized CENPA into centromeres. CENPN is the first protein to bind specifically to CENPA nucleosomes and the direct binding of CENPA nucleosomes by CENPN is required for centromere assembly. Required for chromosome congression and efficiently align the chromosomes on a metaphase plate. In Bos taurus (Bovine), this protein is Centromere protein N (CENPN).